We begin with the raw amino-acid sequence, 283 residues long: Thymidylate synthase (283 aa).

Arginine 22 provides a ligand contact to dUMP. Catalysis depends on cysteine 160, which acts as the Nucleophile. DUMP is bound by residues 180 to 183, asparagine 191, and 221 to 223; these read RSCD and HIY. Aspartate 183 serves as a coordination point for (6R)-5,10-methylene-5,6,7,8-tetrahydrofolate. Residue serine 282 participates in (6R)-5,10-methylene-5,6,7,8-tetrahydrofolate binding.

It belongs to the thymidylate synthase family. Bacterial-type ThyA subfamily. In terms of assembly, homodimer.

It localises to the cytoplasm. The catalysed reaction is dUMP + (6R)-5,10-methylene-5,6,7,8-tetrahydrofolate = 7,8-dihydrofolate + dTMP. The protein operates within pyrimidine metabolism; dTTP biosynthesis. In terms of biological role, catalyzes the reductive methylation of 2'-deoxyuridine-5'-monophosphate (dUMP) to 2'-deoxythymidine-5'-monophosphate (dTMP) while utilizing 5,10-methylenetetrahydrofolate (mTHF) as the methyl donor and reductant in the reaction, yielding dihydrofolate (DHF) as a by-product. This enzymatic reaction provides an intracellular de novo source of dTMP, an essential precursor for DNA biosynthesis. This Photobacterium profundum (strain SS9) protein is Thymidylate synthase.